The chain runs to 414 residues: Mannan endo-1,4-beta-mannosidase 2 (414 aa).

A signal peptide spans 1–25 (MAYFQRLISCIFVLFLLSLAFACEA). Substrate contacts are provided by W95 and N210. E211 acts as the Proton donor in catalysis. Y288 is a binding site for substrate. The Nucleophile role is filled by E328. W370 serves as a coordination point for substrate.

The protein belongs to the glycosyl hydrolase 5 (cellulase A) family.

The protein localises to the secreted. The catalysed reaction is Random hydrolysis of (1-&gt;4)-beta-D-mannosidic linkages in mannans, galactomannans and glucomannans.. Functionally, possesses endo-beta-mannanase activity in vitro. May be involved in seed germination by weakening the endosperm cap prior to radicle emergence. This Solanum lycopersicum (Tomato) protein is Mannan endo-1,4-beta-mannosidase 2 (MAN2).